A 548-amino-acid polypeptide reads, in one-letter code: C-type lectin domain family 4 member F (548 aa).

The Cytoplasmic portion of the chain corresponds to 1–42; the sequence is MKEAELNRDMARYCTDNQCVSLQPQGLGPKSAALMAPRTLRH. The chain crosses the membrane as a helical; Signal-anchor for type II membrane protein span at residues 43–69; the sequence is VQVILALMVVTVIFSLLALFVVASQPW. At 70–548 the chain is on the extracellular side; that stretch reads RPEWNKEPPS…STGWSAARVG (479 aa). 6 N-linked (GlcNAc...) asparagine glycosylation sites follow: N86, N92, N115, N132, N209, and N255. The C-type lectin domain occupies 438-538; it reads KFCTSQGAHL…GSSYPWVCKK (101 aa). Disulfide bonds link C440–C536 and C516–C528.

Kupffer cells.

Its subcellular location is the membrane. Receptor with an affinity for galactose and fucose. Could be involved in endocytosis. This Mus musculus (Mouse) protein is C-type lectin domain family 4 member F (Clec4f).